Reading from the N-terminus, the 179-residue chain is MARLQEFYKETVAPDLLKQFGYKSVMEVPRITKITLNMGVGEAVGDKKILEHAVGDMVKIAGQKPVVTKARKSIAGFKIRDGYPIGCMVTLRGAKMFEFLDRLVTVAMPRIRDFRGIGGKGFDGRGNYNLGVKEQIIFPEIEYDKIDALRGMNISITTTAKSDQEARALLVAFKFPFKN.

The protein belongs to the universal ribosomal protein uL5 family. Part of the 50S ribosomal subunit; part of the 5S rRNA/L5/L18/L25 subcomplex. Contacts the 5S rRNA and the P site tRNA. Forms a bridge to the 30S subunit in the 70S ribosome.

In terms of biological role, this is one of the proteins that bind and probably mediate the attachment of the 5S RNA into the large ribosomal subunit, where it forms part of the central protuberance. In the 70S ribosome it contacts protein S13 of the 30S subunit (bridge B1b), connecting the 2 subunits; this bridge is implicated in subunit movement. Contacts the P site tRNA; the 5S rRNA and some of its associated proteins might help stabilize positioning of ribosome-bound tRNAs. This Aromatoleum aromaticum (strain DSM 19018 / LMG 30748 / EbN1) (Azoarcus sp. (strain EbN1)) protein is Large ribosomal subunit protein uL5.